A 645-amino-acid chain; its full sequence is ATP-dependent zinc metalloprotease FtsH (645 aa).

Over 1–8 the chain is Cytoplasmic; sequence MDFNREHK. Residues 9–29 traverse the membrane as a helical segment; it reads INFLYVLAAMVGVLLIQSLVS. The Periplasmic segment spans residues 30-105; the sequence is QPDHIRTIPY…FSGEPEPGPW (76 aa). A helical transmembrane segment spans residues 106 to 126; sequence PTILGWLMPIVGFALVWMFLI. Over 127–645 the chain is Cytoplasmic; it reads RPMSMGPGMD…ALTVEGGEAQ (519 aa). 199–206 serves as a coordination point for ATP; the sequence is GPPGTGKT. Residue His-423 participates in Zn(2+) binding. Glu-424 is a catalytic residue. His-427 and Asp-500 together coordinate Zn(2+). The segment at 612-645 is disordered; that stretch reads SASVLRDGGDGAADAGQDRSGEHRALTVEGGEAQ. The span at 627-637 shows a compositional bias: basic and acidic residues; sequence GQDRSGEHRAL.

This sequence in the central section; belongs to the AAA ATPase family. It in the C-terminal section; belongs to the peptidase M41 family. In terms of assembly, homohexamer. It depends on Zn(2+) as a cofactor.

The protein localises to the cell inner membrane. Functionally, acts as a processive, ATP-dependent zinc metallopeptidase for both cytoplasmic and membrane proteins. Plays a role in the quality control of integral membrane proteins. The sequence is that of ATP-dependent zinc metalloprotease FtsH from Paraburkholderia phymatum (strain DSM 17167 / CIP 108236 / LMG 21445 / STM815) (Burkholderia phymatum).